We begin with the raw amino-acid sequence, 428 residues long: MYEESSCFDPNSMVDNNGGFCAAETTFTVSHQFQPPLGSTTNSFDDDLKLPTMDEFSVFPSVISLPNSETQNQNISNNNHLINQMIQESNWGVSEDNSNFFMNTSHPNTTTTPIPDLLSLLHLPRCSMSLPSSDIMAGSCFTYDPLFHLNLPPQPPLIPSNDYSGYLLGIDTNTTTQRDESNVGDENNNAQFDSGIIEFSKEIRRKGRGKRKNKPFTTERERRCHLNERYEALKLLIPSPSKGDRASILQDGIDYINELRRRVSELKYLVERKRCGGRHKNNEVDDNNNNKNLDDHGNEDDDDDDENMEKKPESDVIDQCSSNNSLRCSWLQRKSKVTEVDVRIVDDEVTIKVVQKKKINCLLLVSKVLDQLQLDLHHVAGGQIGEHYSFLFNTKIYEGSTIYASAIANRVIEVVDKHYMASLPNSNY.

Residues 210–259 (KRKNKPFTTERERRCHLNERYEALKLLIPSPSKGDRASILQDGIDYINEL) enclose the bHLH domain. Residues 278-320 (RHKNNEVDDNNNNKNLDDHGNEDDDDDDENMEKKPESDVIDQC) form a disordered region. Residues 297–307 (GNEDDDDDDEN) are compositionally biased toward acidic residues.

In terms of assembly, homodimer. In terms of tissue distribution, flowers.

The protein localises to the nucleus. The chain is Transcription factor bHLH91 (BHLH91) from Arabidopsis thaliana (Mouse-ear cress).